Reading from the N-terminus, the 586-residue chain is 25S rRNA (adenine-N(1))-methyltransferase (586 aa).

Disordered regions lie at residues 23–229 and 536–573; these read GTAP…LTPL and GKCV…EVKD. A compositionally biased stretch (low complexity) spans 25-41; that stretch reads APAAPAPASAPAVSSSK. Residues 65–83 are compositionally biased toward basic and acidic residues; sequence LWEKVIEQKKEGVADGVKK. The segment covering 99–108 has biased composition (polar residues); it reads KLSNSNNDGN. The span at 114–123 shows a compositional bias: basic residues; sequence NNKKKNKNKN. A compositionally biased stretch (acidic residues) spans 144 to 163; that stretch reads GEEDEDDNNDDADEWEGIDE. Over residues 164-182 the composition is skewed to basic and acidic residues; that stretch reads DEKHASSEKPTPKKDDKKQ. A compositionally biased stretch (low complexity) spans 183–192; sequence QQLQQQQQQK. Polar residues predominate over residues 204 to 213; the sequence is NGTTSNWQQD. Low complexity predominate over residues 217–229; it reads PKTATPAPKLTPL. Residues 539-549 show a composition bias toward basic and acidic residues; it reads VPKDGQEDTTK. The segment covering 550 to 559 has biased composition (basic residues); sequence NKKGGQKPKP.

It belongs to the methyltransferase superfamily. RRP8 family.

The protein localises to the nucleus. It is found in the nucleolus. S-adenosyl-L-methionine-dependent methyltransferase that specifically methylates the N(1) position of a conserved adenine in helix 25.1 in 25S rRNA. Required both for ribosomal 40S and 60S subunits biogenesis. Required for efficient pre-rRNA cleavage at site A2. The polypeptide is 25S rRNA (adenine-N(1))-methyltransferase (RPR8) (Chaetomium thermophilum (strain DSM 1495 / CBS 144.50 / IMI 039719) (Thermochaetoides thermophila)).